Here is a 160-residue protein sequence, read N- to C-terminus: Ribosomal RNA large subunit methyltransferase H (160 aa).

2 residues coordinate S-adenosyl-L-methionine: leucine 76 and glycine 108.

The protein belongs to the RNA methyltransferase RlmH family. As to quaternary structure, homodimer.

It is found in the cytoplasm. It carries out the reaction pseudouridine(1915) in 23S rRNA + S-adenosyl-L-methionine = N(3)-methylpseudouridine(1915) in 23S rRNA + S-adenosyl-L-homocysteine + H(+). Specifically methylates the pseudouridine at position 1915 (m3Psi1915) in 23S rRNA. The chain is Ribosomal RNA large subunit methyltransferase H from Nitrobacter hamburgensis (strain DSM 10229 / NCIMB 13809 / X14).